Here is a 416-residue protein sequence, read N- to C-terminus: Serine hydroxymethyltransferase (416 aa).

Residues leucine 118 and 122–124 each bind (6S)-5,6,7,8-tetrahydrofolate; that span reads GHL. Position 226 is an N6-(pyridoxal phosphate)lysine (lysine 226). A (6S)-5,6,7,8-tetrahydrofolate-binding site is contributed by 350-352; sequence SPF.

The protein belongs to the SHMT family. As to quaternary structure, homodimer. The cofactor is pyridoxal 5'-phosphate.

Its subcellular location is the cytoplasm. The catalysed reaction is (6R)-5,10-methylene-5,6,7,8-tetrahydrofolate + glycine + H2O = (6S)-5,6,7,8-tetrahydrofolate + L-serine. It participates in one-carbon metabolism; tetrahydrofolate interconversion. Its pathway is amino-acid biosynthesis; glycine biosynthesis; glycine from L-serine: step 1/1. In terms of biological role, catalyzes the reversible interconversion of serine and glycine with tetrahydrofolate (THF) serving as the one-carbon carrier. This reaction serves as the major source of one-carbon groups required for the biosynthesis of purines, thymidylate, methionine, and other important biomolecules. Also exhibits THF-independent aldolase activity toward beta-hydroxyamino acids, producing glycine and aldehydes, via a retro-aldol mechanism. The sequence is that of Serine hydroxymethyltransferase from Sulfurovum sp. (strain NBC37-1).